We begin with the raw amino-acid sequence, 526 residues long: Arp2/3 complex-activating protein rickA (526 aa).

The tract at residues 305-356 (TTSSIAKPLENNVTPPPPLTKNNIPPPPPPPPLSKNNILPPPPPPMPTMAPA) is disordered. A compositionally biased stretch (pro residues) spans 318–352 (TPPPPLTKNNIPPPPPPPPLSKNNILPPPPPPMPT). WH2 domains are found at residues 383–400 (DTSD…LRKV) and 410–427 (SRDL…LRKV). Disordered regions lie at residues 425–452 (RKVE…SKPN) and 464–526 (MEMS…FVRS). The tract at residues 448 to 484 (VSKPNGVASILARRVAMEMSDSSSSSGSESDSGNWSD) is central and acidic domains. Residues 464–480 (MEMSDSSSSSGSESDSG) are compositionally biased toward low complexity. Composition is skewed to polar residues over residues 481–491 (NWSDASVNSNK) and 506–526 (TTHA…FVRS).

In terms of assembly, homodimer.

The protein localises to the cell surface. Functionally, recruits and activates the Arp2/3 complex, which in turn leads to actin polymerization, promoting Rickettsia motility during infection. This is Arp2/3 complex-activating protein rickA (rickA) from Rickettsia felis (strain ATCC VR-1525 / URRWXCal2) (Rickettsia azadi).